Consider the following 430-residue polypeptide: Trigger factor (430 aa).

One can recognise a PPIase FKBP-type domain in the interval T165–P250.

It belongs to the FKBP-type PPIase family. Tig subfamily.

It localises to the cytoplasm. The catalysed reaction is [protein]-peptidylproline (omega=180) = [protein]-peptidylproline (omega=0). Functionally, involved in protein export. Acts as a chaperone by maintaining the newly synthesized protein in an open conformation. Functions as a peptidyl-prolyl cis-trans isomerase. This Onion yellows phytoplasma (strain OY-M) protein is Trigger factor.